Reading from the N-terminus, the 129-residue chain is NADH-quinone oxidoreductase subunit A (129 aa).

Helical transmembrane passes span F6 to F26, L63 to V83, and G89 to Y109.

It belongs to the complex I subunit 3 family. As to quaternary structure, NDH-1 is composed of 14 different subunits. Subunits NuoA, H, J, K, L, M, N constitute the membrane sector of the complex.

Its subcellular location is the cell inner membrane. It catalyses the reaction a quinone + NADH + 5 H(+)(in) = a quinol + NAD(+) + 4 H(+)(out). Its function is as follows. NDH-1 shuttles electrons from NADH, via FMN and iron-sulfur (Fe-S) centers, to quinones in the respiratory chain. The immediate electron acceptor for the enzyme in this species is believed to be ubiquinone. Couples the redox reaction to proton translocation (for every two electrons transferred, four hydrogen ions are translocated across the cytoplasmic membrane), and thus conserves the redox energy in a proton gradient. This is NADH-quinone oxidoreductase subunit A from Nitrosococcus oceani (strain ATCC 19707 / BCRC 17464 / JCM 30415 / NCIMB 11848 / C-107).